The primary structure comprises 557 residues: Inositol-3-phosphate synthase 1 (557 aa).

Positions 67, 68, 69, 70, 141, 177, 178, 188, 191, 228, 229, 230, 231, 278, 279, 303, 306, 337, 338, 339, and 352 each coordinate NAD(+). Phosphoserine is present on serine 279. Phosphoserine is present on serine 357. NAD(+)-binding residues include glycine 390, aspartate 391, aspartate 419, and serine 420. Residues 512-557 (GPGIKPGEVVATSPLPCKKEPTPATNGCTGDANGHPQAPTPKLSTA) are disordered. At serine 524 the chain carries Phosphoserine.

It belongs to the myo-inositol 1-phosphate synthase family. It depends on NAD(+) as a cofactor. In testis, it is expressed in Sertoli cells. Highly expressed in 2 types of germ cells, pachytene spermatocytes and round spermatids.

The protein localises to the cytoplasm. It catalyses the reaction D-glucose 6-phosphate = 1D-myo-inositol 3-phosphate. The protein operates within polyol metabolism; myo-inositol biosynthesis; myo-inositol from D-glucose 6-phosphate: step 1/2. Key enzyme in myo-inositol biosynthesis pathway that catalyzes the conversion of glucose 6-phosphate to 1-myo-inositol 1-phosphate in a NAD-dependent manner. Rate-limiting enzyme in the synthesis of all inositol-containing compounds. This is Inositol-3-phosphate synthase 1 (Isyna1) from Mus musculus (Mouse).